Consider the following 154-residue polypeptide: Superoxide dismutase [Cu-Zn] (154 aa).

3 residues coordinate Cu cation: histidine 47, histidine 49, and histidine 64. Cysteines 58 and 147 form a disulfide. Zn(2+)-binding residues include histidine 64, histidine 72, histidine 81, and aspartate 84. Histidine 121 is a binding site for Cu cation. Arginine 144 is a binding site for substrate.

The protein belongs to the Cu-Zn superoxide dismutase family. Homodimer. Cu cation serves as cofactor. Requires Zn(2+) as cofactor.

Its subcellular location is the cytoplasm. The enzyme catalyses 2 superoxide + 2 H(+) = H2O2 + O2. Functionally, destroys radicals which are normally produced within the cells and which are toxic to biological systems. This is Superoxide dismutase [Cu-Zn] (SOD1) from Claviceps purpurea (strain 20.1) (Ergot fungus).